The following is a 478-amino-acid chain: Zinc metalloproteinase/disintegrin (478 aa).

The signal sequence occupies residues 1–20 (MIQVLLVTICLAAFPYQGSS). A propeptide spanning residues 21 to 187 (IILESGNVND…PIKKASDLNL (167 aa)) is cleaved from the precursor. A Peptidase M12B domain is found at 193 to 389 (RYVELFIVVD…QKPQCILKKP (197 aa)). Intrachain disulfides connect cysteine 304–cysteine 384, cysteine 344–cysteine 368, and cysteine 346–cysteine 351. Histidine 329 is a Zn(2+) binding site. Glutamate 330 is a catalytic residue. Histidine 333 and histidine 339 together coordinate Zn(2+). Residues 390 to 407 (LRTDTVSTPVSGNELLEA) constitute a propeptide that is removed on maturation. One can recognise a Disintegrin domain in the interval 397–478 (TPVSGNELLE…ADCPRNGLYG (82 aa)). Intrachain disulfides connect cysteine 411–cysteine 426, cysteine 413–cysteine 421, cysteine 420–cysteine 443, cysteine 434–cysteine 440, cysteine 439–cysteine 464, and cysteine 452–cysteine 471. A Cell attachment site; atypical (MVD) motif is present at residues 456 to 458 (MVD).

Belongs to the venom metalloproteinase (M12B) family. P-II subfamily. P-IIa sub-subfamily. Monomer (disintegrin). Zn(2+) is required as a cofactor. In terms of tissue distribution, expressed by the venom gland.

The protein resides in the secreted. The catalysed reaction is Cleavage of 3-Asn-|-Gln-4, 9-Ser-|-His-10 and 14-Ala-|-Leu-15 bonds in insulin B chain and 14-Tyr-|-Gln-15 and 8-Thr-|-Ser-9 in A chain. Cleaves type IV collagen at 73-Ala-|-Gln-74 in alpha1-(IV) and at 7-Gly-|-Leu-8 in alpha2-(IV).. Functionally, snake venom zinc metalloproteinase that causes hemorrhage by provoking the degradation of the sub-endothelial matrix proteins (fibronectin, laminin, type IV collagen, nidogen, and gelatins). In terms of biological role, potent inhibitor of both collagen- (IC(50)=4 nM) and ADP-induced (IC(50)=8 nM) platelet aggregation. May act by binding to the platelet receptor GPIIb/GPIIIa (ITGA2B/ITGB3). The sequence is that of Zinc metalloproteinase/disintegrin from Crotalus atrox (Western diamondback rattlesnake).